Consider the following 543-residue polypeptide: Tyrosine-protein kinase Yes (543 aa).

The span at 1–20 (MGCIKSKENKSPAIKYRPEN) shows a compositional bias: basic and acidic residues. The segment at 1–45 (MGCIKSKENKSPAIKYRPENTPEPVSTSVSHYGAEPTTVSPCPSS) is disordered. A lipid anchor (N-myristoyl glycine) is attached at G2. C3 carries the S-palmitoyl cysteine; in membrane form lipid modification. A Phosphothreonine modification is found at T21. Y32 carries the post-translational modification Phosphotyrosine. The residue at position 40 (S40) is a Phosphoserine. The SH3 domain maps to 91 to 152 (GGVTIFVALY…PSNYVAPADS (62 aa)). The 98-residue stretch at 158–255 (WYFGKMGRKD…GLCHKLTTVC (98 aa)) folds into the SH2 domain. The 254-residue stretch at 277–530 (LRLEVKLGQG…YIQSFLEDYF (254 aa)) folds into the Protein kinase domain. ATP-binding positions include 283-291 (LGQGCFGEV) and K305. Phosphotyrosine is present on residues Y336 and Y345. D396 (proton acceptor) is an active-site residue. Y426 bears the Phosphotyrosine; by autocatalysis mark. Y446 carries the phosphotyrosine modification. Phosphotyrosine; by CSK is present on Y537.

The protein belongs to the protein kinase superfamily. Tyr protein kinase family. SRC subfamily. Interacts with YAP1 and CSF1R. Interacts with CTNND1; this interaction allows YES1-mediated activation of FYN and FER and subsequent phosphorylation of CTNND1. Interacts with FASLG. Interacts with IL6ST/gp130. Interacts with SCRIB, when YES1 is in a closed conformation; the interaction facilitates YES1 autophosphorylation. In terms of processing, phosphorylated. Phosphorylation by CSK on the C-terminal tail maintains the enzyme in an inactive state. Autophosphorylation at Tyr-426 maintains enzyme activity by blocking CSK-mediated inhibition. Palmitoylation at Cys-3 promotes membrane localization. In terms of tissue distribution, expressed in the epithelial cells of renal proximal tubules and stomach as well as hematopoietic cells in the bone marrow and spleen in the fetal tissues. In adult, expressed in epithelial cells of the renal proximal tubules and present in keratinocytes in the basal epidermal layer of epidermis.

It localises to the cell membrane. The protein resides in the cytoplasm. Its subcellular location is the cytoskeleton. It is found in the microtubule organizing center. The protein localises to the centrosome. It localises to the cytosol. The protein resides in the cell junction. It catalyses the reaction L-tyrosyl-[protein] + ATP = O-phospho-L-tyrosyl-[protein] + ADP + H(+). In terms of biological role, non-receptor protein tyrosine kinase that is involved in the regulation of cell growth and survival, apoptosis, cell-cell adhesion, cytoskeleton remodeling, and differentiation. Stimulation by receptor tyrosine kinases (RTKs) including EGFR, PDGFR, CSF1R and FGFR leads to recruitment of YES1 to the phosphorylated receptor, and activation and phosphorylation of downstream substrates. Upon EGFR activation, promotes the phosphorylation of PARD3 to favor epithelial tight junction assembly. Participates in the phosphorylation of specific junctional components such as CTNND1 by stimulating the FYN and FER tyrosine kinases at cell-cell contacts. Upon T-cell stimulation by CXCL12, phosphorylates collapsin response mediator protein 2/DPYSL2 and induces T-cell migration. Participates in CD95L/FASLG signaling pathway and mediates AKT-mediated cell migration. Plays a role in cell cycle progression by phosphorylating the cyclin-dependent kinase 4/CDK4 thus regulating the G1 phase. Also involved in G2/M progression and cytokinesis. Catalyzes phosphorylation of organic cation transporter OCT2 which induces its transport activity. In Homo sapiens (Human), this protein is Tyrosine-protein kinase Yes (YES1).